The following is a 229-amino-acid chain: Potassium/proton antiporter CemA (229 aa).

3 helical membrane passes run 7 to 27, 106 to 126, and 189 to 209; these read LTPLPYLASIVFLPWWISISF, IILHFSTNIICFAILSGYSIL, and IISGLVSTFPVILDTILKYWI.

Belongs to the CemA family.

Its subcellular location is the plastid. The protein resides in the chloroplast inner membrane. The enzyme catalyses K(+)(in) + H(+)(out) = K(+)(out) + H(+)(in). Contributes to K(+)/H(+) antiport activity by supporting proton efflux to control proton extrusion and homeostasis in chloroplasts in a light-dependent manner to modulate photosynthesis. Prevents excessive induction of non-photochemical quenching (NPQ) under continuous-light conditions. Indirectly promotes efficient inorganic carbon uptake into chloroplasts. The polypeptide is Potassium/proton antiporter CemA (Liriodendron tulipifera (Tuliptree)).